The sequence spans 464 residues: Zinc transporter 6 (464 aa).

At 1–33 the chain is on the cytoplasmic side; it reads MGTIYLFRKTQRSLLGKLTQEFRLVTADRRSWK. Residues 34-54 form a helical membrane-spanning segment; that stretch reads ILLFGAINVVCTGFLLTWCSS. The Extracellular segment spans residues 55-64; sequence TNSMALTAYT. The helical transmembrane segment at 65–85 threads the bilayer; it reads YLTIFDLFSLITCLISYWVMM. The Cytoplasmic portion of the chain corresponds to 86-98; that stretch reads KKPSPTYSFGFER. Residues 99-119 traverse the membrane as a helical segment; that stretch reads FEVLSVFASTVLAQLGALFIL. The Extracellular portion of the chain corresponds to 120–134; it reads KESAERFVEQPEIHT. The helical transmembrane segment at 135–155 threads the bilayer; that stretch reads GRLLVGTFVALCFNLFSMLSI. The Cytoplasmic portion of the chain corresponds to 156-200; the sequence is RNKPFAYVSEAASTSWLQEHVADLSRSLCGIIPGLSSIFLPRMNP. A helical membrane pass occupies residues 201-221; sequence FVLIDIAGALALCITYMLIEI. Topologically, residues 222–228 are extracellular; sequence NNYFAVD. Residues 229–249 traverse the membrane as a helical segment; sequence TASAIAIAVMTFGTMYPMSVY. Residues 250–464 lie on the Cytoplasmic side of the membrane; that stretch reads SGKVLLQTTP…TPGQFTQFKQ (215 aa).

This sequence belongs to the cation diffusion facilitator (CDF) transporter (TC 2.A.4) family. SLC30A subfamily. In terms of assembly, heterodimer with SLC30A5; form a functional zinc ion transmembrane transporter.

Its subcellular location is the golgi apparatus. It is found in the trans-Golgi network membrane. Its function is as follows. Has probably no intrinsic transporter activity but together with SLC30A5 forms a functional zinc ion:proton antiporter heterodimer, mediating zinc entry into the lumen of organelles along the secretory pathway. As part of that zinc ion:proton antiporter, contributes to zinc ion homeostasis within the early secretory pathway and regulates the activation and folding of enzymes like alkaline phosphatases and enzymes involved in phosphatidylinositol glycan anchor biosynthesis. The polypeptide is Zinc transporter 6 (slc30a6) (Xenopus tropicalis (Western clawed frog)).